Here is a 511-residue protein sequence, read N- to C-terminus: 2-isopropylmalate synthase (511 aa).

Positions 5–267 (IQIFDTTLRD…ESQINLEETK (263 aa)) constitute a Pyruvate carboxyltransferase domain. Residues D14, H202, H204, and N238 each coordinate Mn(2+). Residues 391-511 (QLDNLQLQYV…EYELKEGIRT (121 aa)) are regulatory domain.

The protein belongs to the alpha-IPM synthase/homocitrate synthase family. LeuA type 1 subfamily. As to quaternary structure, homodimer. The cofactor is Mn(2+).

The protein resides in the cytoplasm. It carries out the reaction 3-methyl-2-oxobutanoate + acetyl-CoA + H2O = (2S)-2-isopropylmalate + CoA + H(+). It functions in the pathway amino-acid biosynthesis; L-leucine biosynthesis; L-leucine from 3-methyl-2-oxobutanoate: step 1/4. Functionally, catalyzes the condensation of the acetyl group of acetyl-CoA with 3-methyl-2-oxobutanoate (2-ketoisovalerate) to form 3-carboxy-3-hydroxy-4-methylpentanoate (2-isopropylmalate). The protein is 2-isopropylmalate synthase of Staphylococcus epidermidis (strain ATCC 35984 / DSM 28319 / BCRC 17069 / CCUG 31568 / BM 3577 / RP62A).